A 335-amino-acid chain; its full sequence is Protein-arginine kinase (335 aa).

One can recognise a Phosphagen kinase C-terminal domain in the interval 21 to 244; sequence VIISSRIRLA…NQIINEEKQI (224 aa). Residues 24 to 28, His82, Arg115, 166 to 170, and 197 to 202 each bind ATP; these read SSRIR, RASVM, and RGIYGE.

Belongs to the ATP:guanido phosphotransferase family.

It carries out the reaction L-arginyl-[protein] + ATP = N(omega)-phospho-L-arginyl-[protein] + ADP + H(+). Its function is as follows. Catalyzes the specific phosphorylation of arginine residues in proteins. The chain is Protein-arginine kinase from Staphylococcus epidermidis (strain ATCC 12228 / FDA PCI 1200).